Reading from the N-terminus, the 427-residue chain is 3-phosphoshikimate 1-carboxyvinyltransferase (427 aa).

K22, S23, and R27 together coordinate 3-phosphoshikimate. K22 lines the phosphoenolpyruvate pocket. Positions 96 and 124 each coordinate phosphoenolpyruvate. Residues S170, S171, Q172, S198, D314, N337, and K341 each coordinate 3-phosphoshikimate. Q172 is a binding site for phosphoenolpyruvate. The active-site Proton acceptor is the D314. Phosphoenolpyruvate contacts are provided by R345, R387, and K412.

The protein belongs to the EPSP synthase family. As to quaternary structure, monomer.

The protein localises to the cytoplasm. It catalyses the reaction 3-phosphoshikimate + phosphoenolpyruvate = 5-O-(1-carboxyvinyl)-3-phosphoshikimate + phosphate. It functions in the pathway metabolic intermediate biosynthesis; chorismate biosynthesis; chorismate from D-erythrose 4-phosphate and phosphoenolpyruvate: step 6/7. Its function is as follows. Catalyzes the transfer of the enolpyruvyl moiety of phosphoenolpyruvate (PEP) to the 5-hydroxyl of shikimate-3-phosphate (S3P) to produce enolpyruvyl shikimate-3-phosphate and inorganic phosphate. The polypeptide is 3-phosphoshikimate 1-carboxyvinyltransferase (Tolumonas auensis (strain DSM 9187 / NBRC 110442 / TA 4)).